The primary structure comprises 123 residues: Small ribosomal subunit protein uS12 (123 aa).

Positions 1–32 are disordered; that stretch reads MPTIQQLVRKGRTDKISKNKTPALKGSPQRRG. Position 89 is a 3-methylthioaspartic acid (D89). The disordered stretch occupies residues 103–123; sequence DTQGVKGRKQARSRYGAKKEK. A compositionally biased stretch (basic residues) spans 108 to 123; that stretch reads KGRKQARSRYGAKKEK.

This sequence belongs to the universal ribosomal protein uS12 family. As to quaternary structure, part of the 30S ribosomal subunit. Contacts proteins S8 and S17. May interact with IF1 in the 30S initiation complex.

Functionally, with S4 and S5 plays an important role in translational accuracy. Its function is as follows. Interacts with and stabilizes bases of the 16S rRNA that are involved in tRNA selection in the A site and with the mRNA backbone. Located at the interface of the 30S and 50S subunits, it traverses the body of the 30S subunit contacting proteins on the other side and probably holding the rRNA structure together. The combined cluster of proteins S8, S12 and S17 appears to hold together the shoulder and platform of the 30S subunit. This Cutibacterium acnes (strain DSM 16379 / KPA171202) (Propionibacterium acnes) protein is Small ribosomal subunit protein uS12.